A 132-amino-acid chain; its full sequence is Small ribosomal subunit protein uS8 (132 aa).

It belongs to the universal ribosomal protein uS8 family. Part of the 30S ribosomal subunit. Contacts proteins S5 and S12.

One of the primary rRNA binding proteins, it binds directly to 16S rRNA central domain where it helps coordinate assembly of the platform of the 30S subunit. The polypeptide is Small ribosomal subunit protein uS8 (Paracoccus denitrificans (strain Pd 1222)).